The sequence spans 413 residues: Dual-specificity RNA methyltransferase RlmN (413 aa).

Glu126 (proton acceptor) is an active-site residue. In terms of domain architecture, Radical SAM core spans 132–381; the sequence is EEGRGTLCIS…IRTPRGRDIL (250 aa). Cys139 and Cys384 form a disulfide bridge. Residues Cys146, Cys150, and Cys153 each contribute to the [4Fe-4S] cluster site. Residues 210 to 211, Ser242, 264 to 266, and Asn341 each bind S-adenosyl-L-methionine; these read GE and SLH. Cys384 serves as the catalytic S-methylcysteine intermediate.

Belongs to the radical SAM superfamily. RlmN family. [4Fe-4S] cluster is required as a cofactor.

It is found in the cytoplasm. The catalysed reaction is adenosine(2503) in 23S rRNA + 2 reduced [2Fe-2S]-[ferredoxin] + 2 S-adenosyl-L-methionine = 2-methyladenosine(2503) in 23S rRNA + 5'-deoxyadenosine + L-methionine + 2 oxidized [2Fe-2S]-[ferredoxin] + S-adenosyl-L-homocysteine. It catalyses the reaction adenosine(37) in tRNA + 2 reduced [2Fe-2S]-[ferredoxin] + 2 S-adenosyl-L-methionine = 2-methyladenosine(37) in tRNA + 5'-deoxyadenosine + L-methionine + 2 oxidized [2Fe-2S]-[ferredoxin] + S-adenosyl-L-homocysteine. Its function is as follows. Specifically methylates position 2 of adenine 2503 in 23S rRNA and position 2 of adenine 37 in tRNAs. m2A2503 modification seems to play a crucial role in the proofreading step occurring at the peptidyl transferase center and thus would serve to optimize ribosomal fidelity. In Sinorhizobium medicae (strain WSM419) (Ensifer medicae), this protein is Dual-specificity RNA methyltransferase RlmN.